A 265-amino-acid chain; its full sequence is MSEQQMDLKDLMPTKRKYMWKTAEDRRMSDLTCVLEWLERRQGKKKQAPEKQKPKVVTVLKRNKKKEEKKGKGLMTARGGNRRDTETSQQALGKRFRKDAASYRSLYGVEQKGKHLSMVPGSYIKDGPKKSDTDIKDAVDPESTQRPNPFRRQSIVLDPMLQEGTFNSQRATFIRDWSNKMPDMAYERKLKSLMEKSTEPKMETMRMLKPEEVLSCRYLRLSKENIRTLLKLCKDAGMNVDIHPHMVEEDIDAKKVFTGIPSMAL.

Disordered stretches follow at residues 62-94 (RNKK…ALGK) and 118-149 (MVPG…RPNP). A compositionally biased stretch (basic and acidic residues) spans 126–139 (DGPKKSDTDIKDAV).

This is an uncharacterized protein from Homo sapiens (Human).